We begin with the raw amino-acid sequence, 525 residues long: 2,3-bisphosphoglycerate-independent phosphoglycerate mutase (525 aa).

Residues Asp-18 and Ser-68 each contribute to the Mn(2+) site. Ser-68 acts as the Phosphoserine intermediate in catalysis. Residues His-129, 159 to 160 (RD), Arg-194, Arg-200, 269 to 272 (RADR), and Lys-345 contribute to the substrate site. Mn(2+) is bound by residues Asp-413, His-417, Asp-454, His-455, and His-473.

Belongs to the BPG-independent phosphoglycerate mutase family. Monomer. Mn(2+) serves as cofactor.

It catalyses the reaction (2R)-2-phosphoglycerate = (2R)-3-phosphoglycerate. Its pathway is carbohydrate degradation; glycolysis; pyruvate from D-glyceraldehyde 3-phosphate: step 3/5. Functionally, catalyzes the interconversion of 2-phosphoglycerate and 3-phosphoglycerate. This chain is 2,3-bisphosphoglycerate-independent phosphoglycerate mutase, found in Chromohalobacter salexigens (strain ATCC BAA-138 / DSM 3043 / CIP 106854 / NCIMB 13768 / 1H11).